Here is a 178-residue protein sequence, read N- to C-terminus: Ribosome maturation factor RimM (178 aa).

Residues 103–177 form the PRC barrel domain; sequence SKDEYYFFEI…KIVVKVPEWL (75 aa).

The protein belongs to the RimM family. In terms of assembly, binds ribosomal protein uS19.

The protein localises to the cytoplasm. In terms of biological role, an accessory protein needed during the final step in the assembly of 30S ribosomal subunit, possibly for assembly of the head region. Essential for efficient processing of 16S rRNA. May be needed both before and after RbfA during the maturation of 16S rRNA. It has affinity for free ribosomal 30S subunits but not for 70S ribosomes. This Thermosipho africanus (strain TCF52B) protein is Ribosome maturation factor RimM.